A 417-amino-acid polypeptide reads, in one-letter code: Gamma-glutamyl phosphate reductase (417 aa).

This sequence belongs to the gamma-glutamyl phosphate reductase family.

The protein resides in the cytoplasm. It catalyses the reaction L-glutamate 5-semialdehyde + phosphate + NADP(+) = L-glutamyl 5-phosphate + NADPH + H(+). It functions in the pathway amino-acid biosynthesis; L-proline biosynthesis; L-glutamate 5-semialdehyde from L-glutamate: step 2/2. Catalyzes the NADPH-dependent reduction of L-glutamate 5-phosphate into L-glutamate 5-semialdehyde and phosphate. The product spontaneously undergoes cyclization to form 1-pyrroline-5-carboxylate. The polypeptide is Gamma-glutamyl phosphate reductase (Escherichia coli O17:K52:H18 (strain UMN026 / ExPEC)).